We begin with the raw amino-acid sequence, 104 residues long: Large ribosomal subunit protein uL24 (104 aa).

This sequence belongs to the universal ribosomal protein uL24 family. As to quaternary structure, part of the 50S ribosomal subunit.

Its function is as follows. One of two assembly initiator proteins, it binds directly to the 5'-end of the 23S rRNA, where it nucleates assembly of the 50S subunit. Functionally, one of the proteins that surrounds the polypeptide exit tunnel on the outside of the subunit. In Idiomarina loihiensis (strain ATCC BAA-735 / DSM 15497 / L2-TR), this protein is Large ribosomal subunit protein uL24.